The following is a 78-amino-acid chain: Mu-conotoxin BuIIIB (78 aa).

Residues 1–22 (MMSKLGVLLTICLLLFPLFALP) form the signal peptide. Residues 23–51 (QDGDQPADRPAERMQDDISSEQNPLLEKR) constitute a propeptide that is removed on maturation. A disordered region spans residues 26-46 (DQPADRPAERMQDDISSEQNP). The span at 28–38 (PADRPAERMQD) shows a compositional bias: basic and acidic residues. Disulfide bonds link Cys-56/Cys-68, Cys-57/Cys-74, and Cys-64/Cys-75. Cys-75 is modified (cysteine amide).

The protein belongs to the conotoxin M superfamily. In terms of tissue distribution, expressed by the venom duct.

The protein resides in the secreted. Mu-conotoxins block voltage-gated sodium channels (Nav). This synthetic toxin potently blocks rNav1.4/SCN4A (Kd=0.34-3.6 nM), rNav1.2/SCN2A (Kd=13 nM), rNav1.3/SCN3A (Kd=200 nM), rNav1.1/SCN1A (Kd=360 nM), mNav1.6/SCN8A (IC(50)=1.8 uM), rNav1.5/SCN5A (IC(50)=9 uM), rNav1.6/SCN8A (IC(50)&gt;30 uM). It is noteworthy that the toxin is 50-fold more potent on mouse Nav1.6 than on rat Nav1.6. The block of SCN4A is very slowly reversible. The protein is Mu-conotoxin BuIIIB of Conus bullatus (Bubble cone).